A 164-amino-acid polypeptide reads, in one-letter code: Peptide deformylase (164 aa).

2 residues coordinate Fe cation: cysteine 87 and histidine 129. The active site involves glutamate 130. Histidine 133 is a binding site for Fe cation.

Belongs to the polypeptide deformylase family. It depends on Fe(2+) as a cofactor.

It carries out the reaction N-terminal N-formyl-L-methionyl-[peptide] + H2O = N-terminal L-methionyl-[peptide] + formate. Removes the formyl group from the N-terminal Met of newly synthesized proteins. Requires at least a dipeptide for an efficient rate of reaction. N-terminal L-methionine is a prerequisite for activity but the enzyme has broad specificity at other positions. The protein is Peptide deformylase of Thermotoga maritima (strain ATCC 43589 / DSM 3109 / JCM 10099 / NBRC 100826 / MSB8).